The chain runs to 101 residues: Phosphoribosyl-ATP pyrophosphatase (101 aa).

Belongs to the PRA-PH family.

The protein resides in the cytoplasm. The enzyme catalyses 1-(5-phospho-beta-D-ribosyl)-ATP + H2O = 1-(5-phospho-beta-D-ribosyl)-5'-AMP + diphosphate + H(+). Its pathway is amino-acid biosynthesis; L-histidine biosynthesis; L-histidine from 5-phospho-alpha-D-ribose 1-diphosphate: step 2/9. This is Phosphoribosyl-ATP pyrophosphatase from Natronomonas pharaonis (strain ATCC 35678 / DSM 2160 / CIP 103997 / JCM 8858 / NBRC 14720 / NCIMB 2260 / Gabara) (Halobacterium pharaonis).